Reading from the N-terminus, the 166-residue chain is Protein UTR5 (166 aa).

The protein is Protein UTR5 (UTR5) of Saccharomyces cerevisiae (strain ATCC 204508 / S288c) (Baker's yeast).